Reading from the N-terminus, the 567-residue chain is Cytochrome P450 monooxygenase 69 (567 aa).

A helical membrane pass occupies residues 7-24 (ELAALTVVLLATGVLFYA). 4 N-linked (GlcNAc...) asparagine glycosylation sites follow: N25, N81, N223, and N279. C475 contacts heme.

It belongs to the cytochrome P450 family. The cofactor is heme.

The protein localises to the membrane. It participates in secondary metabolite biosynthesis. In terms of biological role, cytochrome P450 monooxygenase that is able to use 4-ethoxybenzoic acid as a substrate for oxidation. In Postia placenta (strain ATCC 44394 / Madison 698-R) (Brown rot fungus), this protein is Cytochrome P450 monooxygenase 69.